The primary structure comprises 318 residues: NADH-ubiquinone oxidoreductase chain 1 (318 aa).

8 helical membrane passes run 2–22, 68–88, 102–122, 146–166, 171–191, 217–237, 253–273, and 294–314; these read FLMN…FLTL, ISLF…MWIP, ILFI…SGWA, LAII…SSLI, FTWL…STLA, AGPF…MNAL, EMFT…FLWI, and LPLT…MACI.

Belongs to the complex I subunit 1 family.

It is found in the mitochondrion inner membrane. It carries out the reaction a ubiquinone + NADH + 5 H(+)(in) = a ubiquinol + NAD(+) + 4 H(+)(out). In terms of biological role, core subunit of the mitochondrial membrane respiratory chain NADH dehydrogenase (Complex I) that is believed to belong to the minimal assembly required for catalysis. Complex I functions in the transfer of electrons from NADH to the respiratory chain. The immediate electron acceptor for the enzyme is believed to be ubiquinone. The protein is NADH-ubiquinone oxidoreductase chain 1 (MT-ND1) of Tamias sibiricus (Siberian chipmunk).